The chain runs to 398 residues: Ornithine aminotransferase (398 aa).

N6-(pyridoxal phosphate)lysine is present on Lys-256.

It belongs to the class-III pyridoxal-phosphate-dependent aminotransferase family. OAT subfamily. Requires pyridoxal 5'-phosphate as cofactor.

The protein localises to the cytoplasm. It catalyses the reaction a 2-oxocarboxylate + L-ornithine = L-glutamate 5-semialdehyde + an L-alpha-amino acid. Its pathway is amino-acid biosynthesis; L-proline biosynthesis; L-glutamate 5-semialdehyde from L-ornithine: step 1/1. Its function is as follows. Catalyzes the interconversion of ornithine to glutamate semialdehyde. The chain is Ornithine aminotransferase from Oceanobacillus iheyensis (strain DSM 14371 / CIP 107618 / JCM 11309 / KCTC 3954 / HTE831).